A 148-amino-acid chain; its full sequence is Transcriptional regulator MraZ (148 aa).

2 consecutive SpoVT-AbrB domains span residues 5 to 51 (AAAL…PSPA) and 80 to 123 (ARTE…SEAG).

Belongs to the MraZ family. Forms oligomers.

It is found in the cytoplasm. The protein localises to the nucleoid. The polypeptide is Transcriptional regulator MraZ (Dechloromonas aromatica (strain RCB)).